We begin with the raw amino-acid sequence, 241 residues long: Ubiquinone biosynthesis O-methyltransferase (241 aa).

4 residues coordinate S-adenosyl-L-methionine: arginine 44, glycine 63, aspartate 84, and methionine 128.

It belongs to the methyltransferase superfamily. UbiG/COQ3 family.

The catalysed reaction is a 3-demethylubiquinol + S-adenosyl-L-methionine = a ubiquinol + S-adenosyl-L-homocysteine + H(+). The enzyme catalyses a 3-(all-trans-polyprenyl)benzene-1,2-diol + S-adenosyl-L-methionine = a 2-methoxy-6-(all-trans-polyprenyl)phenol + S-adenosyl-L-homocysteine + H(+). Its pathway is cofactor biosynthesis; ubiquinone biosynthesis. In terms of biological role, O-methyltransferase that catalyzes the 2 O-methylation steps in the ubiquinone biosynthetic pathway. In Hydrogenovibrio crunogenus (strain DSM 25203 / XCL-2) (Thiomicrospira crunogena), this protein is Ubiquinone biosynthesis O-methyltransferase.